The chain runs to 411 residues: Probable 26S proteasome regulatory subunit rpn-6.2 (411 aa).

Residues 212-381 form the PCI domain; it reads YKTSFSYFYE…DTVVIYPKAG (170 aa).

This sequence belongs to the proteasome subunit S9 family. In terms of assembly, component of the lid subcomplex of the 19S proteasome regulatory particle complex (also named PA700 complex). The 26S proteasome consists of a 20S proteasome core and two 19S regulatory subunits.

Functionally, component of the lid subcomplex of the 26S proteasome, a multiprotein complex involved in the ATP-dependent degradation of ubiquitinated proteins. In the complex, rpn-6.2 is required for proteasome assembly. The protein is Probable 26S proteasome regulatory subunit rpn-6.2 of Caenorhabditis briggsae.